The primary structure comprises 507 residues: Nuclear poly(A) polymerase 3 (507 aa).

Residues 79–81 (YGS), 91–94 (SDID), Asp-147, Lys-208, Tyr-217, and 226–227 (GV) each bind ATP. Mg(2+) contacts are provided by Asp-92, Asp-94, and Asp-147.

Belongs to the poly(A) polymerase family. As to quaternary structure, monomer. Forms a complex with cleavage and polyadenylation specificity factor (CPSF) subunits FIPS5 and CPSF30. Mg(2+) is required as a cofactor. Mn(2+) serves as cofactor. Expressed in leaves (mostly in petioles and tips), cotyledon, roots (tips, vascular tissue of the radicle, and throughout the root tissue excluding the elongation zone), stems, and flowers (restricted to the stigma and the pollen in mature anthers). Active in the primary and secondary root systems.

It is found in the nucleus. It catalyses the reaction RNA(n) + ATP = RNA(n)-3'-adenine ribonucleotide + diphosphate. In terms of biological role, essential protein. Polymerase that creates the 3'-poly(A) tail of mRNA's. Also required for the endoribonucleolytic cleavage reaction at some polyadenylation sites. May acquire specificity through interaction with a cleavage and polyadenylation specificity factor (CPSF) at its C-terminus. This is Nuclear poly(A) polymerase 3 from Arabidopsis thaliana (Mouse-ear cress).